The chain runs to 1128 residues: Apoptosis-stimulating of p53 protein 2 (1128 aa).

Residues 85–120 (PPNRDIVSGPRSQDPSVKRNGVKVPGEHRRKENGVN) are disordered. Positions 332–348 (NLPQQAVSAPSRVAAVG) are interaction with APPBP1. The tract at residues 393–436 (MRSGAASQSKGSKAHPASPDWNPSNADLLPSQGSSVPQSAGTAL) is disordered. A compositionally biased stretch (polar residues) spans 413-433 (WNPSNADLLPSQGSSVPQSAG). Phosphoserine is present on residues Ser-479, Ser-555, Ser-568, Ser-571, and Ser-575. 2 disordered regions span residues 549 to 596 (QARM…FPPA) and 654 to 705 (NPQQ…LPFL). A compositionally biased stretch (polar residues) spans 562–574 (GQDQVLSPASKQE). The segment covering 654 to 669 (NPQQHPENIYSCSQGK) has biased composition (polar residues). Residues 684 to 693 (HESHENERIP) are compositionally biased toward basic and acidic residues. Residues Ser-697, Ser-713, and Ser-736 each carry the phosphoserine modification. Disordered stretches follow at residues 723 to 748 (KLSNAPRPLKKRSSITEPEGPNGPNI), 802 to 824 (SLVPEPLSPEDMGSASTENSDVP), and 870 to 907 (PPPPYPSGEPEVSEEDSARMRPPEITGQVSLPPGKRTN). The SH3-binding motif lies at 866 to 875 (YPPYPPPPYP). Residues 876 to 1128 (SGEPEVSEED…RIKPRQRSLA (253 aa)) are mediates interaction with APC2. ANK repeat units follow at residues 958-987 (EGITALHNAVCAGHTEIVKFLVQFGVNVNA) and 991-1020 (DGWTPLHCAASCNNVQVCKFLVESGAAVFA). The SH3 domain maps to 1057–1119 (MNKGVIYALW…PRNLLGLYPR (63 aa)).

It belongs to the ASPP family. As to quaternary structure, interacts with P53/TP53; the interaction promotes pro-apoptotic activity. Interacts with BCL2. Interacts with protein phosphatase 1. Interacts with RELA NF-kappa-B subunit. This interaction probably prevents the activation of apoptosis, possibly by preventing its interaction with p53/TP53. Interacts with APC2 and APPBP1. Interacts with DDX42 (via the C-terminus); the interaction is not inhibited by TP53BP2 ubiquitination and is independent of p53/TP53.

It localises to the cytoplasm. It is found in the perinuclear region. Its subcellular location is the nucleus. Functionally, regulator that plays a central role in regulation of apoptosis and cell growth via its interactions with proteins such as TP53. Regulates p53/TP53 by enhancing the DNA binding and transactivation function of p53/TP53 on the promoters of proapoptotic genes in vivo. Inhibits the ability of APPBP1 to conjugate NEDD8 to CUL1, and thereby decreases APPBP1 ability to induce apoptosis. Impedes cell cycle progression at G2/M. Its apoptosis-stimulating activity is inhibited by its interaction with DDX42. The chain is Apoptosis-stimulating of p53 protein 2 (Tp53bp2) from Mus musculus (Mouse).